Reading from the N-terminus, the 475-residue chain is LEC14B homolog (475 aa).

Positions 1–34 are disordered; the sequence is MSYRTRFGKDNSACDSGNAVEGSGSSKGPNEVSN. The span at 23–33 shows a compositional bias: polar residues; that stretch reads SGSSKGPNEVS. 5 WD repeats span residues 211–240, 252–283, 299–329, 375–411, and 423–453; these read DEFG…YVYD, AHSS…KVWD, GHLE…QLWD, GHGV…YIYD, and HHEG…ARWE.

Belongs to the WD repeat LEC14B family.

The chain is LEC14B homolog from Prunus armeniaca (Apricot).